Consider the following 240-residue polypeptide: 26.7 kDa heat shock protein, chloroplastic (240 aa).

Residues 1–43 constitute a chloroplast transit peptide; sequence MAAPFALVSRVSPAARLPIRAAWRRARPTVGLPSSGRARQLAV. Residues 59–84 form a disordered region; that stretch reads HVNQDGGNQQGNAVQRRPRRSSALDG. Residues 126-240 form the sHSP domain; the sequence is LATGEVRMPW…ERKVIDVQVQ (115 aa).

Belongs to the small heat shock protein (HSP20) family. In terms of assembly, may form oligomeric structures. As to expression, expressed in roots, stems, leaves, spikelets and embryos.

It is found in the plastid. It localises to the chloroplast. This is 26.7 kDa heat shock protein, chloroplastic (HSP26.7) from Oryza sativa subsp. japonica (Rice).